A 92-amino-acid chain; its full sequence is Small ribosomal subunit protein uS19 (92 aa).

The protein belongs to the universal ribosomal protein uS19 family.

Its function is as follows. Protein S19 forms a complex with S13 that binds strongly to the 16S ribosomal RNA. This is Small ribosomal subunit protein uS19 from Bradyrhizobium sp. (strain BTAi1 / ATCC BAA-1182).